A 77-amino-acid chain; its full sequence is Small ribosomal subunit protein bS16c (77 aa).

The protein belongs to the bacterial ribosomal protein bS16 family.

It is found in the plastid. It localises to the cyanelle. The polypeptide is Small ribosomal subunit protein bS16c (Cyanophora paradoxa).